A 485-amino-acid chain; its full sequence is Glutamyl-tRNA(Gln) amidotransferase subunit A (485 aa).

Residues lysine 79 and serine 154 each act as charge relay system in the active site. Serine 178 acts as the Acyl-ester intermediate in catalysis.

The protein belongs to the amidase family. GatA subfamily. As to quaternary structure, heterotrimer of A, B and C subunits.

The enzyme catalyses L-glutamyl-tRNA(Gln) + L-glutamine + ATP + H2O = L-glutaminyl-tRNA(Gln) + L-glutamate + ADP + phosphate + H(+). Its function is as follows. Allows the formation of correctly charged Gln-tRNA(Gln) through the transamidation of misacylated Glu-tRNA(Gln) in organisms which lack glutaminyl-tRNA synthetase. The reaction takes place in the presence of glutamine and ATP through an activated gamma-phospho-Glu-tRNA(Gln). The chain is Glutamyl-tRNA(Gln) amidotransferase subunit A from Geobacillus kaustophilus (strain HTA426).